Here is a 245-residue protein sequence, read N- to C-terminus: Thiopurine S-methyltransferase (245 aa).

A Phosphoserine modification is found at serine 14. 29 to 40 (WQDKWVNGKTAF) serves as a coordination point for S-adenosyl-L-methionine. Phenylalanine 40 is a substrate binding site. Lysine 58 carries the N6-acetyllysine modification. Residues leucine 69, glutamate 90, 134–135 (SI), and arginine 152 contribute to the S-adenosyl-L-methionine site.

This sequence belongs to the class I-like SAM-binding methyltransferase superfamily. TPMT family. As to quaternary structure, monomer.

It is found in the cytoplasm. The catalysed reaction is S-adenosyl-L-methionine + a thiopurine = S-adenosyl-L-homocysteine + a thiopurine S-methylether.. In Chlorocebus aethiops (Green monkey), this protein is Thiopurine S-methyltransferase (TPMT).